Reading from the N-terminus, the 120-residue chain is NAD(P)H-quinone oxidoreductase subunit 3, chloroplastic (120 aa).

Transmembrane regions (helical) follow at residues 9 to 29, 64 to 84, and 88 to 108; these read IFWA…LISG, MFAL…PWAM, and VLGV…ILGL.

It belongs to the complex I subunit 3 family. NDH is composed of at least 16 different subunits, 5 of which are encoded in the nucleus.

The protein resides in the plastid. It localises to the chloroplast thylakoid membrane. The catalysed reaction is a plastoquinone + NADH + (n+1) H(+)(in) = a plastoquinol + NAD(+) + n H(+)(out). It carries out the reaction a plastoquinone + NADPH + (n+1) H(+)(in) = a plastoquinol + NADP(+) + n H(+)(out). In terms of biological role, NDH shuttles electrons from NAD(P)H:plastoquinone, via FMN and iron-sulfur (Fe-S) centers, to quinones in the photosynthetic chain and possibly in a chloroplast respiratory chain. The immediate electron acceptor for the enzyme in this species is believed to be plastoquinone. Couples the redox reaction to proton translocation, and thus conserves the redox energy in a proton gradient. In Aethionema cordifolium (Lebanon stonecress), this protein is NAD(P)H-quinone oxidoreductase subunit 3, chloroplastic.